Consider the following 601-residue polypeptide: MKLQAVMETLIQRQQRARQELEARQAPPPPPPEPTGVRARTTMTDEDREPENARMHRTQMAALAAMRAAAAGLGHPSSPGGSEDGPPISGDEDTAREGTLSSPALHGSVLEGAGHAEGDRHLMDVGSDDDDTKSKWEEQELEELGEEEEEEEEEDDFEEEEEEEEGLGPPESASLGTAGLFTRKAPPAQAFRGDGGPRMLSGPERLGPGPAHPSHMASQMPPPDHGDWTFEEQFKQLYELDADPKRKEFLDDLFSFMQKRGTPVNRIPIMAKQVLDLFMLYVLVTEKGGLVEVINKKLWREITKGLNLPTSITSAAFTLRTQYMKYLYPYECERRGLSSPNELQAAIDSNRREGRRQSFGGSLFAYSPSGAHSMLPSPKLPVTPLGLAASTNGSSITPAPKIKKEEDSAIPITVPGRLPVSLAGHPVVAAQAAAVQAAAAQAAVAAQAAALEQLREKLESTEPPEKKMALVADEQQRLMQRAVQQSFLAMTAQLPMNIRINSQASESRQDSAVSLTSANGSNSISMSVEMNGIVYTGVLFAQPPPPTAPSAPGKGGVSSIGTNTTTGSRTGASGSTVSGGQVGLPGVSTPTMSSTSNNSLP.

Residues 1–224 (MKLQAVMETL…HMASQMPPPD (224 aa)) are disordered. Residues 60-89 (MAALAAMRAAAAGLGHPSSPGGSEDGPPIS) are compositionally biased toward low complexity. Phosphoserine occurs at positions 78, 82, and 89. The residue at position 99 (threonine 99) is a Phosphothreonine. At serine 102 the chain carries Phosphoserine. The span at 114–123 (GHAEGDRHLM) shows a compositional bias: basic and acidic residues. Serine 127 carries the post-translational modification Phosphoserine. The tract at residues 128–165 (DDDDTKSKWEEQELEELGEEEEEEEEEDDFEEEEEEEE) is acidic. Residues 139 to 166 (QELEELGEEEEEEEEEDDFEEEEEEEEG) are compositionally biased toward acidic residues. The ARID domain maps to 243–335 (DPKRKEFLDD…YLYPYECERR (93 aa)). Residues serine 358 and serine 367 each carry the phosphoserine modification. Glycyl lysine isopeptide (Lys-Gly) (interchain with G-Cter in SUMO2) cross-links involve residues lysine 403, lysine 404, lysine 457, and lysine 467. One can recognise an REKLES domain in the interval 449–546 (AALEQLREKL…GVLFAQPPPP (98 aa)). The interval 450–493 (ALEQLREKLESTEPPEKKMALVADEQQRLMQRAVQQSFLAMTAQ) is important for nuclear localization. Positions 495 to 518 (PMNIRINSQASESRQDSAVSLTSA) are homodimerization. Residues 542–562 (QPPPPTAPSAPGKGGVSSIGT) are important for cytoplasmic localization. Residues 545–601 (PPTAPSAPGKGGVSSIGTNTTTGSRTGASGSTVSGGQVGLPGVSTPTMSSTSNNSLP) form a disordered region. Low complexity-rich tracts occupy residues 559 to 579 (SIGT…TVSG) and 588 to 601 (STPT…NSLP).

Homodimer. Heterodimer with ARID3B. Interacts with E2F1. Interacts with GTF2I and BTK. B-cell specific in the adult. Expressed in B-cell progenitors, down-regulated in the immature B-cell stage, and is up-regulated again at later stages of B-lymphocyte differentiation.

The protein resides in the nucleus. It is found in the cytoplasm. In terms of biological role, transcription factor involved in B-cell differentiation. Binds a VH promoter proximal site necessary for induced mu-heavy-chain transcription. Binds the minor groove of a restricted ATC sequence that is sufficient for nuclear matrix association. This sequence motif is present in matrix-associating regions (MARS) proximal to the promoter and flanking E mu. Activates E mu-driven transcription by binding these sites. May be involved in the control of cell cycle progression by the RB1/E2F1 pathway. This is AT-rich interactive domain-containing protein 3A (Arid3a) from Mus musculus (Mouse).